Here is a 2111-residue protein sequence, read N- to C-terminus: MAVLSSVQPINHNSALVEARDEQVNTTACSDDLLNAPPYEYDTEGNPSWAGALPKAQALYDPAYEKDSCGVGFTCHIKGQVSHKIVTDARLLLCNMTHRGATGADTRDGDGAGVMTGMPYTFMQKEFGQIGCTLPKSGEYAIGNVFFSPEADVCREAMTAFTQVAEKLGLAILAWRSVPCDNSILGPAALSREPTILQPCVVLKAAYDGEAEFDTDLFERQLYVLRKQSSHLIGKEKWFYICSLHRETIVYKGQLAPVQVYNYFLDLNNAEYVSHFALVHSRFSTNTFPSWDRAQPMRLAAHNGEINTLRGNKNWMHAREGLMKSSRFGEEFASLLPIIERGGSDSAAFDNVIELLCASGVVSLPEAVMLLIPEAWQNDKNISDEKAAFYEWAACQMEPWDGPALFTFADGRYCGANLDRNGLRPCRFYLTSDDMMICASEVGTVGIEPDRIVQKGRLYPGRMLLVDTKEGRIVDDKELKHNIASRYDFRSWLDQELIDMNSIVDSLIESTSVDLTPIVDDVPLADDKTMLAFGYTLEQINMIMAPMANGGKETLGSMGNDAAIACLSDQPRLLYDYFRQLFAQVTNPPIDPIREAIVMSLQCYIGPSGNLLEINQSQCRRLRMPTPILTVEEFNALKNVDRIYPDWKVASIDITFFKSEGVAGYAAAIERICSEADTAVNEGYKAIVLSDRNVNSERVPLASIAACGAVHHYLVQNKLRSRVALVCESGDAREVHHMCTLLGYGADAVCPYLAMEALTKLVRQNAMKPGITEETAIKNFKHAINGGILKVMSKMGISTLQSYKGAQIFEALGIDNEVINKCFLGTASRIRGVTFEHIALDAFALHERGYPTDQSIRSLQIPDMGDFYYRDGGEQHVNHPKAIASLQDAVRNKNEAAYAEFSRTHYEQTRRCTLRGMLDFDFDSSQAIPIEQVEPWTEIVRRFCTGAMSYGSISMESHSSLAIAMNRLGGKSNTGEGGEDPARSQRLANGDTMRSAIKQIASGRFGVTSWYLSDADELQIKMAQGAKPGEGGELPGNKVSESIAKTRHSTAGVGLISPPPHHDIYSIEDLKQLIYDMKSANPRARVSVKLVSEVGVGIVASGVAKAKADHILVSGHDGGTGASRWTGIKYAGLPWELGVAETHQTLVLNDLRGRVVIQTDGQIRTGRDVAIACLLGAEEWGFATTPLIALGCIMMRKCHLNTCPVGIATQDPELRKKFEGQPEHVVNFFYYVAEELRGIMAKLGFRTINEMVGRSDKLKVAEPINNKSKLLDLTPLLTPAFTLRPGAATYNVRKQDHRLYTRLDNKLIDEAEVTLEEGIPSVVECEIINTDRTLGATLSNKISKRYGEEGLPTDSIRVNVFGSAGQSFGAFLAPGVTLQLEGDCNDYVGKGLSGGRLIIYPPRVSPFKPEENMIIGNVCLYGATSGHAFISGVAAERFAVRNSGAIAVVEGVGDHGCEYMTGGRVVILGSTGRNFAAGMSGGIAYVYDMQMDFAGKINTEMVDISSVTDAAEIAFLRGLIQDHRHYTGSQVADRILSDFPRHLSRFVKVLPREYKAVLEREAAKKEEAKRLQYPKAFMPGNPIRQQIEETNAQIADVEDTLGATVKKSAPLDKLRGFMKYQRRSEHYRNPLKRTNDWKELSVRLREDELRVQTARCMDCGTPFCQSDYGCPISNKIFTWNDLVFKQQWKEALTQLLLTNNFPEFTGRVCPAPCEGACTLGIIESPVGIKSVERAIIDKAWEEGWIVPRPPAERTGRRVAIIGSGPAGLAAADQLNRAGHHVVIYERADRPGGLLQYGIPNMKLDKKVVERRIQLMIDEGIEVLTNVEVGKNGDVSLDELHKVYDAVVLASGSTVPRDLPIPNRDSKGIHFAMEFLHKNTKSLLDSELKDGNYISAKGKDVIVIGGGDTGNDCLGTSVRHGAKSVRNLELLPIPPRERAFDNPWPQYPRVFRVDYGHAEVQAHYGQDFREYSILTKSFEKDEDGNVKGINTVRIEWTKNSKGRWIMKEIRNSEEFFPADLVILALGFLGPEEQATAGMNVDRDARSNISTPTKSYETSVPGIYAAGDCRRGQSLVVWGIQEGRQCAREIDLKFQGKTFLPGDGGLVKRTVNC.

The active-site Nucleophile is C69. The 401-residue stretch at 69–469 (CGVGFTCHIK…PGRMLLVDTK (401 aa)) folds into the Glutamine amidotransferase type-2 domain. Residues 969 to 990 (GGKSNTGEGGEDPARSQRLANG) are disordered. An FMN-binding site is contributed by 1139-1191 (VAETHQTLVLNDLRGRVVIQTDGQIRTGRDVAIACLLGAEEWGFATTPLIALG). [3Fe-4S] cluster is bound by residues C1192, C1198, and C1203.

Belongs to the glutamate synthase family. In terms of assembly, homotrimer. [3Fe-4S] cluster serves as cofactor. Requires FAD as cofactor. FMN is required as a cofactor.

It is found in the cytoplasm. It carries out the reaction 2 L-glutamate + NAD(+) = L-glutamine + 2-oxoglutarate + NADH + H(+). It functions in the pathway amino-acid biosynthesis; L-glutamate biosynthesis via GLT pathway; L-glutamate from 2-oxoglutarate and L-glutamine (NAD(+) route): step 1/1. The protein operates within energy metabolism; nitrogen metabolism. With respect to regulation, in the presence of 10 mM allantoin, the activity is reduced more than 25%. Functionally, forms L-glutamate from L-glutamine and 2-oxoglutarate. Represents an alternative pathway to L-glutamate dehydrogenase for the biosynthesis of L-glutamate. Participates with glutamine synthetase in ammonia assimilation processes. The enzyme is specific for NADH, L-glutamine and 2-oxoglutarate. This Schizosaccharomyces pombe (strain 972 / ATCC 24843) (Fission yeast) protein is Glutamate synthase [NADH] (glt1).